We begin with the raw amino-acid sequence, 127 residues long: Protein FAM229A (127 aa).

A disordered region spans residues 1-96 (MLPSSTPGPG…ATEHNPVRPL (96 aa)). A compositionally biased stretch (low complexity) spans 24-39 (RSPAARAPAAASSLGP).

It belongs to the FAM229 family.

This is Protein FAM229A (FAM229A) from Homo sapiens (Human).